The following is a 163-amino-acid chain: Nucleotide-binding protein Npun_R4736 (163 aa).

This sequence belongs to the YajQ family.

Its function is as follows. Nucleotide-binding protein. The chain is Nucleotide-binding protein Npun_R4736 from Nostoc punctiforme (strain ATCC 29133 / PCC 73102).